Reading from the N-terminus, the 303-residue chain is N-acetylmuramic acid 6-phosphate etherase (303 aa).

Residues 60-223 (ATASLQAGGR…STGVMVKLGK (164 aa)) form the SIS domain. Glutamate 88 serves as the catalytic Proton donor. Residue glutamate 119 is part of the active site.

Belongs to the GCKR-like family. MurNAc-6-P etherase subfamily. Homodimer.

It catalyses the reaction N-acetyl-D-muramate 6-phosphate + H2O = N-acetyl-D-glucosamine 6-phosphate + (R)-lactate. It functions in the pathway amino-sugar metabolism; 1,6-anhydro-N-acetylmuramate degradation. Its pathway is amino-sugar metabolism; N-acetylmuramate degradation. The protein operates within cell wall biogenesis; peptidoglycan recycling. In terms of biological role, specifically catalyzes the cleavage of the D-lactyl ether substituent of MurNAc 6-phosphate, producing GlcNAc 6-phosphate and D-lactate. Together with AnmK, is also required for the utilization of anhydro-N-acetylmuramic acid (anhMurNAc) either imported from the medium or derived from its own cell wall murein, and thus plays a role in cell wall recycling. The chain is N-acetylmuramic acid 6-phosphate etherase from Pectobacterium atrosepticum (strain SCRI 1043 / ATCC BAA-672) (Erwinia carotovora subsp. atroseptica).